We begin with the raw amino-acid sequence, 382 residues long: Histidinol-phosphate aminotransferase (382 aa).

N6-(pyridoxal phosphate)lysine is present on Lys215. Positions Asn360 to Ile382 are disordered.

It belongs to the class-II pyridoxal-phosphate-dependent aminotransferase family. Histidinol-phosphate aminotransferase subfamily. In terms of assembly, homodimer. Requires pyridoxal 5'-phosphate as cofactor.

The catalysed reaction is L-histidinol phosphate + 2-oxoglutarate = 3-(imidazol-4-yl)-2-oxopropyl phosphate + L-glutamate. The protein operates within amino-acid biosynthesis; L-histidine biosynthesis; L-histidine from 5-phospho-alpha-D-ribose 1-diphosphate: step 7/9. The sequence is that of Histidinol-phosphate aminotransferase from Yersinia pseudotuberculosis serotype IB (strain PB1/+).